We begin with the raw amino-acid sequence, 724 residues long: Protein arginine N-methyltransferase 1.6 (724 aa).

2 SAM-dependent MTase PRMT-type domains span residues 61-388 (NDQP…YNLK) and 395-721 (HERT…IVTH). Residues Glu-183 and Glu-192 contribute to the active site.

The protein belongs to the class I-like SAM-binding methyltransferase superfamily. Protein arginine N-methyltransferase family. PRMT7 subfamily.

In terms of biological role, arginine methyltransferase that can both catalyze the formation of omega-N monomethylarginine (MMA) and symmetrical dimethylarginine (sDMA). This chain is Protein arginine N-methyltransferase 1.6 (PRMT16), found in Arabidopsis thaliana (Mouse-ear cress).